The chain runs to 250 residues: MNIDMNRFISILQFLTRIPIKRDVPMEEAFHKGIIYFPVVGGIIGALLMVAYRGASLYLAHSLSALLTVGFFVFLTGGLHLDGLGDTFDGLYSNRNKETILEIMKDSRLGTNGVLAMVFILLLKLYGIQGLGEHQIYWGIILMPVMGRQAIVYGCYRTIYGRSQGLGHLFIGKVSKKELLISSLLTFILAAMHLPSLIFALLLPIGSQLYKGHVMKKIDGMTGDTLGSLCELTEGCYLLFILLITGAGLF.

Helical transmembrane passes span 32 to 52 (KGII…MVAY), 59 to 79 (LAHS…TGGL), 113 to 133 (GVLA…GLGE), 136 to 156 (IYWG…YGCY), 185 to 205 (LTFI…LLPI), and 230 to 250 (CELT…AGLF).

Belongs to the CobS family. It depends on Mg(2+) as a cofactor.

It is found in the cell membrane. It carries out the reaction alpha-ribazole + adenosylcob(III)inamide-GDP = adenosylcob(III)alamin + GMP + H(+). The enzyme catalyses alpha-ribazole 5'-phosphate + adenosylcob(III)inamide-GDP = adenosylcob(III)alamin 5'-phosphate + GMP + H(+). It functions in the pathway cofactor biosynthesis; adenosylcobalamin biosynthesis; adenosylcobalamin from cob(II)yrinate a,c-diamide: step 7/7. Its function is as follows. Joins adenosylcobinamide-GDP and alpha-ribazole to generate adenosylcobalamin (Ado-cobalamin). Also synthesizes adenosylcobalamin 5'-phosphate from adenosylcobinamide-GDP and alpha-ribazole 5'-phosphate. The polypeptide is Adenosylcobinamide-GDP ribazoletransferase (Alkaliphilus metalliredigens (strain QYMF)).